A 356-amino-acid chain; its full sequence is MNSLEAGRVLSVLDEALEGIRLISYVTQDVLDTAEQLRDMLGEDLANALIKHRQLIQSAKSTLNNDQVQASTLELVRLLKKSPSAQRLQVLPYERTYGILQTLQYFEQLRQFAQKRLTTTVEEDSSNREFFEEVRDREERAVAEQEQLKQKLKLQRVELQKAAGTIQVSEDRARGEVSEVQSSTQQSRAAIEGSARAQSEADKSSFQSDLDQVTKELAAARAELARLRQEHKDNEALLRKARKRAEQDVEVQIGEYDADVGAKEEELGKARAEYEEVLRQLQEYNSGWSEMYQERLEYEERERRLADQRFQAALLAVRQNHAARVIQSYWRGFKKAREAAKKKAKKLEKAKAAKKK.

A coiled-coil region spans residues 126 to 167 (SNREFFEEVRDREERAVAEQEQLKQKLKLQRVELQKAAGTIQ). The segment at 173–209 (ARGEVSEVQSSTQQSRAAIEGSARAQSEADKSSFQSD) is disordered. Residues 178–187 (SEVQSSTQQS) are compositionally biased toward low complexity. Positions 197 to 287 (AQSEADKSSF…LRQLQEYNSG (91 aa)) form a coiled coil. In terms of domain architecture, IQ spans 319–348 (QNHAARVIQSYWRGFKKAREAAKKKAKKLE).

This sequence belongs to the DRC10 family. In terms of assembly, component of the nexin-dynein regulatory complex (N-DRC).

The protein localises to the cytoplasm. Its subcellular location is the cytoskeleton. It localises to the flagellum axoneme. In terms of biological role, component of the nexin-dynein regulatory complex (N-DRC), a key regulator of ciliary/flagellar motility which maintains the alignment and integrity of the distal axoneme and regulates microtubule sliding in motile axonemes. This Chlamydomonas reinhardtii (Chlamydomonas smithii) protein is Dynein regulatory complex protein 10.